Reading from the N-terminus, the 508-residue chain is Prenylcysteine oxidase 1 (508 aa).

A signal peptide spans 1-31 (MDPAAPGLACSILRLGLGLLLLCSWWYPGSA). N-linked (GlcNAc...) asparagine glycans are attached at residues N199, N291, and N356.

Belongs to the prenylcysteine oxidase family. Requires FAD as cofactor.

It is found in the lysosome. It catalyses the reaction an S-polyprenyl-L-cysteine + O2 + H2O = a polyprenal + L-cysteine + H2O2. It carries out the reaction S-(2E,6E)-farnesyl-L-cysteine + O2 + H2O = (2E,6E)-farnesal + L-cysteine + H2O2. The catalysed reaction is [(2E,6E,10E)-geranylgeranyl]-L-cysteine + O2 + H2O = (2E,6E,10E)-geranylgeranial + L-cysteine + H2O2. Functionally, prenylcysteine oxidase that cleaves the thioether bond of prenyl-L-cysteines, such as farnesylcysteine and geranylgeranylcysteine. Only active against free prenylcysteines and not prenylcysteine residues within prenylated proteins or peptides. Involved in the final step in the degradation of prenylated proteins, by degrading prenylcysteines after the protein has been degraded. The polypeptide is Prenylcysteine oxidase 1 (Bos taurus (Bovine)).